A 383-amino-acid chain; its full sequence is MKLTSIPIASTLLSLLAASGTLASPLHKRDDPLNNKQFGLMSIHSGNSYVHLHPFYVGDSGAIYLDPTDGTSTSAVFSMSNGRLVVGNLYASVDSNGTTIFKSDANAASTKFSAGDATNVGYNLLYNGTQSAVACPASDNDQVYQVYFGAGNGNPNCAGIAIEAFVSPSSSSSSSSSAATSTSTRVSSSAKASTSSGAIAYTTKCVVVPVTASATATAKAASAAASSAVYPLFPHGIRLIDSANPSSNSGNVYSPVVFQKQNNHTNTIFTFDVPQVSGSCELNLHLDTSGFPITVEGSNGVGQFILFNLSSVANDSTVYSNRPNRIAEIGRFNCSSSGCDYATNVTCPNSYTAVSYEMMALTDDSYLSFFEEADPLEGLTLRV.

Residues 1–23 (MKLTSIPIASTLLSLLAASGTLA) form the signal peptide.

This sequence belongs to the but2 family.

The protein resides in the cytoplasm. Its subcellular location is the nucleus. This is an uncharacterized protein from Schizosaccharomyces pombe (strain 972 / ATCC 24843) (Fission yeast).